The sequence spans 941 residues: MutS protein homolog 1 (941 aa).

747–754 contributes to the ATP binding site; the sequence is GPNMAGKS.

The protein belongs to the DNA mismatch repair MutS family.

The protein resides in the cytoplasm. It localises to the mitochondrion. Involved in mitochondrial DNA repair. This Schizosaccharomyces pombe (strain 972 / ATCC 24843) (Fission yeast) protein is MutS protein homolog 1 (msh1).